Reading from the N-terminus, the 1876-residue chain is Vitellogenin-2 (1876 aa).

An N-terminal signal peptide occupies residues 1-16 (MMWKTLLCCLLAVSAA). Residues 21–838 (WEPGKRYEYH…SRDSFMPKSV (818 aa)) form the Vitellogenin domain. N-linked (GlcNAc...) asparagine glycans are attached at residues Asn-211 and Asn-290. The segment at 322-424 (TGEPSQRDSA…SSSSSSEEYL (103 aa)) is disordered. Composition is skewed to low complexity over residues 330-368 (SAYA…SSSR) and 387-404 (SQPR…SKRS). Asn-409 is a glycosylation site (N-linked (GlcNAc...) asparagine). Residues 411–420 (SSSSSSSSSS) show a composition bias toward low complexity. N-linked (GlcNAc...) asparagine glycans are attached at residues Asn-595, Asn-631, Asn-932, Asn-1012, and Asn-1055. Residues 1192–1239 (SYDNRYTQPEEEEETRQHSKIRRPRSASRKHRRSRHEERAPLENLEVS) form a disordered region. The span at 1209–1225 (HSKIRRPRSASRKHRRS) shows a compositional bias: basic residues. 10 N-linked (GlcNAc...) asparagine glycosylation sites follow: Asn-1318, Asn-1398, Asn-1417, Asn-1424, Asn-1469, Asn-1532, Asn-1636, Asn-1719, Asn-1760, and Asn-1770. Residues 1518-1703 (PTCVVDYSKV…TLVRDLDRSR (186 aa)) enclose the VWFD domain. Cysteines 1520 and 1664 form a disulfide. Residues 1729–1788 (SGIRPYDIDDDSSSSSSSSSSSSSSSSSSKSNSTSSSSSESNESALPRGENKLHRAQQPS) are disordered. Residues 1741 to 1772 (SSSSSSSSSSSSSSSSSKSNSTSSSSSESNES) show a composition bias toward low complexity.

It localises to the secreted. Functionally, precursor of the egg-yolk proteins that are sources of nutrients during embryonic development. The polypeptide is Vitellogenin-2 (VG2) (Periplaneta americana (American cockroach)).